The chain runs to 420 residues: Ribosome biogenesis protein WDR12 homolog (420 aa).

The tract at residues 10-92 (VQVHLKTKQE…EDAIEIEYVE (83 aa)) is ubiquitin-like (UBL) domain. WD repeat units follow at residues 104–142 (LHDD…LTIS), 143–185 (GHTA…NAVD), 192–231 (GHER…GVEG), 250–288 (GHRE…IKTE), 290–329 (STNK…GSVV), 335–375 (GHNA…APLY), and 379–417 (GHGD…AEDT).

It belongs to the WD repeat WDR12/YTM1 family.

The protein localises to the nucleus. It localises to the nucleolus. It is found in the nucleoplasm. Functionally, required for maturation of ribosomal RNAs and formation of the large ribosomal subunit. The polypeptide is Ribosome biogenesis protein WDR12 homolog (Drosophila sechellia (Fruit fly)).